A 670-amino-acid chain; its full sequence is Solute carrier organic anion transporter family member 1A3 (670 aa).

The Cytoplasmic segment spans residues 1–20 (MGDLEKGAATHGAGCFAKIK). A helical membrane pass occupies residues 21 to 40 (VFLMALTCAYVSKSLSGTFM). Topologically, residues 41 to 59 (SSMLTQIERQFGIPTAIVG) are extracellular. The helical transmembrane segment at 60–80 (FINGSFEIGNLLLIIFVSYFG) threads the bilayer. Over 81–86 (MKLHRP) the chain is Cytoplasmic. A helical transmembrane segment spans residues 87-111 (IVIGVGCAVMGLGCFIISLPHFLMG). The Extracellular segment spans residues 112-155 (RYEYETTILPTSNLSSNSFLCMENQTQTLNPAQDPAECVKEVKS). N-linked (GlcNAc...) asparagine glycosylation is found at N124 and N135. The chain crosses the membrane as a helical span at residues 156–184 (LMWIYVLVGNIIRGIGETPIMPLGVSYIE). Residues 185-203 (NFAKSENSPLYIGILETGK) lie on the Cytoplasmic side of the membrane. The chain crosses the membrane as a helical span at residues 204–224 (MIGPIFGLLLGSFCASIYVDT). The Extracellular segment spans residues 225-242 (GSVNTDDLTITPTDIRWV). The helical transmembrane segment at 243–267 (GAWWIGFLVCAGVNILISIPFFFFP) threads the bilayer. The Cytoplasmic portion of the chain corresponds to 268–311 (KTLPKEGLQENVDGTENAKEESTEKRPRKKNRGITKDFFPFLKS). The interval 277 to 296 (ENVDGTENAKEESTEKRPRK) is disordered. The segment covering 283–292 (ENAKEESTEK) has biased composition (basic and acidic residues). A helical transmembrane segment spans residues 312–333 (PVLQPDLHAVHPYKVLQVNAFN). Topologically, residues 334–353 (IYFSFLPKYLENQYGKSTAE) are extracellular. The chain crosses the membrane as a helical span at residues 354–377 (VIFLMGVYNLPAICIGYLIAGFMM). Residues 378 to 381 (KKFK) lie on the Cytoplasmic side of the membrane. The chain crosses the membrane as a helical span at residues 382–405 (ITVKTAAFLAFCLSLSEYSFGFCN). The Extracellular segment spans residues 406–513 (FLITCDNVPV…PECTNKLQYL (108 aa)). A Kazal-like domain is found at 433-488 (NNVLADCNTRCSCLTKTWDPVCGDNGLAYMSACLAGCEKSVGTGTNMVFHNCSCIQ). 3 cysteine pairs are disulfide-bonded: C439/C469, C445/C465, and C454/C486. N-linked (GlcNAc...) asparagine glycans are attached at residues N483 and N492. The chain crosses the membrane as a helical span at residues 514 to 536 (LILSGFLSILYSFAAIPGYMVFL). The Cytoplasmic portion of the chain corresponds to 537–545 (RCIKSEEKS). A helical membrane pass occupies residues 546–571 (LGIGIHAFCIRVFAGIPAPIYFGALI). Topologically, residues 572-605 (DRTCLHWGTQKCGAPGACRMYDINSFRRIYLGMS) are extracellular. The helical transmembrane segment at 606 to 623 (AALRGSSYLPAFVIVILT) threads the bilayer. Residues 624 to 670 (RKFSLPGKINSSEMEIAEMKLTEKESQCTDVHRNPKFKNDGELKTKL) are Cytoplasmic-facing.

It belongs to the organo anion transporter (TC 2.A.60) family. In terms of tissue distribution, all isoforms are detected in kidney, and many are kidney specific. Isoforms 2 and 13 are also detected in liver. Isoforms 4 and 9/K4 are ubiquitous, but isoform 9/K13 is kidney specific. Isoforms 5 and 14 are detected in all tissues tested, with the exception of pancreas and spleen. Isoforms 11 and 15 are detected in kidney, pancreas and testis. Isoform 7 is detected in kidney, liver, testis and spleen.

The protein resides in the cell membrane. Mediates the Na(+)-independent transport of organic anions such as methotrexate, taurocholate, folate and prostaglandin E2. May contribute to renal secretion and/or reabsorption of hydrophobic anionic compounds. Mediates renal clearance of methotrexate from the blood. The polypeptide is Solute carrier organic anion transporter family member 1A3 (Slco1a3) (Rattus norvegicus (Rat)).